The chain runs to 322 residues: o-succinylbenzoate synthase (322 aa).

Lys-136 serves as the catalytic Proton donor. Residues Asp-165, Glu-194, and Asp-219 each coordinate Mg(2+). Lys-243 acts as the Proton acceptor in catalysis.

This sequence belongs to the mandelate racemase/muconate lactonizing enzyme family. MenC type 1 subfamily. In terms of assembly, monomer. It depends on a divalent metal cation as a cofactor.

It catalyses the reaction (1R,6R)-6-hydroxy-2-succinyl-cyclohexa-2,4-diene-1-carboxylate = 2-succinylbenzoate + H2O. The protein operates within quinol/quinone metabolism; 1,4-dihydroxy-2-naphthoate biosynthesis; 1,4-dihydroxy-2-naphthoate from chorismate: step 4/7. It functions in the pathway cofactor biosynthesis; phylloquinone biosynthesis. In terms of biological role, converts 2-succinyl-6-hydroxy-2,4-cyclohexadiene-1-carboxylate (SHCHC) to 2-succinylbenzoate (OSB). Does not show N-succinylamino acid racemase (NSAR) activity with N-succinyl-L-phenylglycine as substrate. The protein is o-succinylbenzoate synthase of Thermosynechococcus vestitus (strain NIES-2133 / IAM M-273 / BP-1).